We begin with the raw amino-acid sequence, 122 residues long: Large ribosomal subunit protein uL14 (122 aa).

It belongs to the universal ribosomal protein uL14 family. As to quaternary structure, part of the 50S ribosomal subunit. Forms a cluster with proteins L3 and L19. In the 70S ribosome, L14 and L19 interact and together make contacts with the 16S rRNA in bridges B5 and B8.

In terms of biological role, binds to 23S rRNA. Forms part of two intersubunit bridges in the 70S ribosome. This is Large ribosomal subunit protein uL14 from Alcanivorax borkumensis (strain ATCC 700651 / DSM 11573 / NCIMB 13689 / SK2).